A 203-amino-acid chain; its full sequence is MARYTGPRDKVSRRFGVALFGSTKALEKRPFPPGQHGMRAGRKKKSDYGVMLAEKQKLRFQYGVLEGQFRKYYAEAARRRGITGDILLQLLELRLDNVVYRLGFSNTRAGARQLVSHGHITVNGKKTNIASYSCRPGDVIAVGGKASSQQLVTRFLDLTQATVVPDWLECDRDKLTGKIARVPSKEEIAPIVNEQLIVEFYSR.

Residues 93–158 (LRLDNVVYRL…QQLVTRFLDL (66 aa)) form the S4 RNA-binding domain.

Belongs to the universal ribosomal protein uS4 family. In terms of assembly, part of the 30S ribosomal subunit. Contacts protein S5. The interaction surface between S4 and S5 is involved in control of translational fidelity.

Its function is as follows. One of the primary rRNA binding proteins, it binds directly to 16S rRNA where it nucleates assembly of the body of the 30S subunit. With S5 and S12 plays an important role in translational accuracy. The protein is Small ribosomal subunit protein uS4 of Akkermansia muciniphila (strain ATCC BAA-835 / DSM 22959 / JCM 33894 / BCRC 81048 / CCUG 64013 / CIP 107961 / Muc).